We begin with the raw amino-acid sequence, 300 residues long: Tyrosine recombinase XerD (300 aa).

Residues 6 to 89 (LFHKRLIEQF…ALKVFFHFLK (84 aa)) enclose the Core-binding (CB) domain. In terms of domain architecture, Tyr recombinase spans 108–293 (RLPSILSTEE…ASESLIEKFH (186 aa)). Residues Arg-152, Lys-174, His-245, Arg-248, and His-271 contribute to the active site. Residue Tyr-280 is the O-(3'-phospho-DNA)-tyrosine intermediate of the active site.

This sequence belongs to the 'phage' integrase family. XerD subfamily. As to quaternary structure, forms a cyclic heterotetrameric complex composed of two molecules of XerC and two molecules of XerD.

It localises to the cytoplasm. In terms of biological role, site-specific tyrosine recombinase, which acts by catalyzing the cutting and rejoining of the recombining DNA molecules. The XerC-XerD complex is essential to convert dimers of the bacterial chromosome into monomers to permit their segregation at cell division. It also contributes to the segregational stability of plasmids. The polypeptide is Tyrosine recombinase XerD (Chlamydia trachomatis serovar D (strain ATCC VR-885 / DSM 19411 / UW-3/Cx)).